A 414-amino-acid polypeptide reads, in one-letter code: Inositol-tetrakisphosphate 1-kinase (414 aa).

Residue lysine 18 participates in 1D-myo-inositol 1,3,4-trisphosphate binding. ATP contacts are provided by arginine 106 and lysine 157. An ATP-grasp domain is found at 117 to 325 (EAYMEDDRIC…IATVLQGQST (209 aa)). 2 residues coordinate 1D-myo-inositol 1,3,4-trisphosphate: histidine 167 and lysine 199. ATP-binding positions include 188 to 199 (QNFINHNAVLYK), serine 214, serine 232, and serine 236. Mg(2+) contacts are provided by aspartate 281, aspartate 295, and asparagine 297. Asparagine 297 provides a ligand contact to 1D-myo-inositol 1,3,4-trisphosphate. 2 positions are modified to N6-acetyllysine; by EP300 and CREBBP: lysine 340 and lysine 383. At serine 396 the chain carries Phosphoserine. Residue lysine 410 is modified to N6-acetyllysine; by EP300 and CREBBP.

The protein belongs to the ITPK1 family. Monomer. Interacts with GPS1/COPS1. Mg(2+) serves as cofactor. Acetylation by EP300 and CREBBP destabilizes ITPK1, and down-regulates enzymatic activity. Deacetylated by SIRT1. As to expression, expressed in brain &gt; heart &gt; skeletal muscle = kidney = pancreas = liver = placenta &gt; lung. In brain, it is expressed in cerebellum, cerebral cortex, medulla, spinal cord, occipital lobe, frontal lobe, temporal lobe and putamen.

The enzyme catalyses 1D-myo-inositol 3,4,5,6-tetrakisphosphate + ATP = 1D-myo-inositol 1,3,4,5,6-pentakisphosphate + ADP + H(+). It catalyses the reaction 1D-myo-inositol 1,3,4-trisphosphate + ATP = 1D-myo-inositol 1,3,4,5-tetrakisphosphate + ADP + H(+). The catalysed reaction is 1D-myo-inositol 1,3,4-trisphosphate + ATP = 1D-myo-inositol 1,3,4,6-tetrakisphosphate + ADP + H(+). It carries out the reaction 1D-myo-inositol 3,4,6-trisphosphate + ATP = 1D-myo-inositol 1,3,4,6-tetrakisphosphate + ADP + H(+). The enzyme catalyses 1D-myo-inositol 1,3,4-trisphosphate + 1D-myo-inositol 1,3,4,5,6-pentakisphosphate = 1D-myo-inositol 3,4,5,6-tetrakisphosphate + 1D-myo-inositol 1,3,4,6-tetrakisphosphate. It catalyses the reaction 1D-myo-inositol 1,3,4-trisphosphate + 1D-myo-inositol 1,3,4,5,6-pentakisphosphate = 1D-myo-inositol 3,4,5,6-tetrakisphosphate + 1D-myo-inositol 1,3,4,5-tetrakisphosphate. Its function is as follows. Kinase that can phosphorylate various inositol polyphosphate such as Ins(3,4,5,6)P4 or Ins(1,3,4)P3. Phosphorylates Ins(3,4,5,6)P4 at position 1 to form Ins(1,3,4,5,6)P5. This reaction is thought to have regulatory importance, since Ins(3,4,5,6)P4 is an inhibitor of plasma membrane Ca(2+)-activated Cl(-) channels, while Ins(1,3,4,5,6)P5 is not. Also phosphorylates Ins(1,3,4)P3 on O-5 and O-6 to form Ins(1,3,4,6)P4, an essential molecule in the hexakisphosphate (InsP6) pathway. Also acts as an inositol polyphosphate phosphatase that dephosphorylates Ins(1,3,4,5)P4 and Ins(1,3,4,6)P4 to Ins(1,3,4)P3, and Ins(1,3,4,5,6)P5 to Ins(3,4,5,6)P4. May also act as an isomerase that interconverts the inositol tetrakisphosphate isomers Ins(1,3,4,5)P4 and Ins(1,3,4,6)P4 in the presence of ADP and magnesium. Probably acts as the rate-limiting enzyme of the InsP6 pathway. Modifies TNF-alpha-induced apoptosis by interfering with the activation of TNFRSF1A-associated death domain. Plays an important role in MLKL-mediated necroptosis. Produces highly phosphorylated inositol phosphates such as inositolhexakisphosphate (InsP6) which bind to MLKL mediating the release of an N-terminal auto-inhibitory region leading to its activation. Essential for activated phospho-MLKL to oligomerize and localize to the cell membrane during necroptosis. The protein is Inositol-tetrakisphosphate 1-kinase of Homo sapiens (Human).